A 75-amino-acid chain; its full sequence is Metallothionein-like protein 1B (75 aa).

Belongs to the metallothionein superfamily. Type 15 family.

In terms of biological role, metallothioneins have a high content of cysteine residues that bind various heavy metals. This chain is Metallothionein-like protein 1B (MT1B), found in Vicia faba (Broad bean).